The primary structure comprises 550 residues: PAB1-binding protein 1 (550 aa).

A Sm domain is found at 11–95; sequence RLEYLYLNLV…IVMIEVQNAK (85 aa). Disordered regions lie at residues 201-296 and 441-550; these read HDDE…HKRM and GMGN…RVGK. The segment covering 214–223 has biased composition (basic and acidic residues); it reads DVHRPQEKKP. The segment covering 244–262 has biased composition (low complexity); it reads AAAAPATAPTTAPAAAPAP. Residues 263-281 show a composition bias toward pro residues; sequence AAAPPAAAPAAAAPPPPPA.

This sequence belongs to the ataxin-2 family. Forms a complex composed of at least MKT1, PBP1, XAC1 and LSM12. Forms a complex composed of at least MKT1L, PBP1, XAC1 and LSM12. Within the complex, interacts with MKT1 (via C-terminus); the interaction is direct. Interacts (via C-terminus) with ZC3H11; the interaction is direct.

It localises to the cytoplasm. The protein resides in the cytosol. It is found in the stress granule. Its function is as follows. Involved in post-transcriptional regulation of gene expression. Promotes mRNA stabilization by bridging poly(A)-binding protein to mRNAs. This Trypanosoma brucei brucei (strain 927/4 GUTat10.1) protein is PAB1-binding protein 1.